A 647-amino-acid chain; its full sequence is MMNQDNPYAMNQTCKVCGEPAAGFHFGAFTCEGCKSFFGRSYNNLSSISDCKNNGECIINKKNRTACKACRLKKCLMVGMSKSGSRYGRRSNWFKIHCLLQEQQQQAVAAMAAHHNSQQAGGGSSGGSGGGQGMPNGVKGMSGVPPPAAAAAALGMLGHPGGYPGLYAVANAGGSSRSKEELMMLGLDGSVEYGSHKHPVVASPSVSSPDSHNSDSSVEVSSVRGNPLLHLGGKSNSGGSSSGADGSHSGGGGGGGGGVTPGRPPQMRKDLSPFLPLPFPGLASMPVMPPPAFLPPSHLLFPGYHPALYSHHQGLLKPTPEQQQAAVAAAAVQHLFNSSGAGQRFAPGTSPFANHQQHHKEEDQPAPARSPSTHANNNHLLTNGGAADELTKRFYLDAVLKSQQQSPPPTTKLPPHSKQDYSISALVTPNSESGRERVKSRQNEEDDEARADGIIDGAEHDDEEEDLVVSMTPPHSPAQQEERTPAGEDPRPSPGQDNPIDLSMKTTGSSLSSKSSSPEIEPETEISSDVEKNDTDDDDEDLKVTPEEEISVRETADPEIEEDHSSTTETAKTSIENTHNNNNSISNNNNNNNNNNNSILSDSEASETIKRKLDELIEASSENGKRLRLEAPVKVATSNALDLTTKV.

Positions 11–87 (NQTCKVCGEP…VGMSKSGSRY (77 aa)) form a DNA-binding region, nuclear receptor. NR C4-type zinc fingers lie at residues 14–34 (CKVCGEPAAGFHFGAFTCEGC) and 51–75 (CKNNGECIINKKNRTACKACRLKKC). 4 disordered regions span residues 111–142 (MAAHHNSQQAGGGSSGGSGGGQGMPNGVKGMS), 196–274 (HKHP…LSPF), 340–383 (GAGQ…LLTN), and 402–600 (SQQQ…NSIL). Residues 120–134 (AGGGSSGGSGGGQGM) show a composition bias toward gly residues. Low complexity-rich tracts occupy residues 200–223 (VVASPSVSSPDSHNSDSSVEVSSV) and 232–247 (GGKSNSGGSSSGADGS). A compositionally biased stretch (gly residues) spans 248–260 (HSGGGGGGGGGVT). Polar residues-rich tracts occupy residues 370–381 (SPSTHANNNHLL) and 420–432 (DYSISALVTPNSE). 2 stretches are compositionally biased toward basic and acidic residues: residues 433–443 (SGRERVKSRQN) and 480–491 (QEERTPAGEDPR). Over residues 502–519 (LSMKTTGSSLSSKSSSPE) the composition is skewed to low complexity. The segment covering 520-541 (IEPETEISSDVEKNDTDDDDED) has biased composition (acidic residues). Residues 542-556 (LKVTPEEEISVRETA) show a composition bias toward basic and acidic residues. The span at 567–579 (TTETAKTSIENTH) shows a compositional bias: polar residues. The span at 580–599 (NNNNSISNNNNNNNNNNNSI) shows a compositional bias: low complexity.

Belongs to the nuclear hormone receptor family. NR0 subfamily.

The protein resides in the nucleus. In Drosophila melanogaster (Fruit fly), this protein is Knirps-related protein (knrl).